The sequence spans 313 residues: Carbamate kinase 2 (313 aa).

The protein belongs to the carbamate kinase family.

The protein localises to the cytoplasm. It catalyses the reaction hydrogencarbonate + NH4(+) + ATP = carbamoyl phosphate + ADP + H2O + H(+). The protein operates within metabolic intermediate metabolism; carbamoyl phosphate degradation; CO(2) and NH(3) from carbamoyl phosphate: step 1/1. This Staphylococcus aureus (strain Mu50 / ATCC 700699) protein is Carbamate kinase 2 (arcC2).